Here is a 277-residue protein sequence, read N- to C-terminus: uncharacterized protein (277 aa).

2 disordered regions span residues Pro1–Pro103 and Pro254–Arg277. Positions Arg48–Thr65 are enriched in basic and acidic residues. Residues Pro66–Val77 show a composition bias toward polar residues. Over residues Pro82–Gln91 the composition is skewed to basic residues.

This is an uncharacterized protein from Homo sapiens (Human).